We begin with the raw amino-acid sequence, 153 residues long: Troponin C (153 aa).

Ala1 bears the Blocked amino end (Ala) mark. 4 EF-hand domains span residues 10–45, 46–81, 86–121, and 122–153; these read EQVQ…LGQT, FEEK…FLVE, AMQE…LDDK, and LTED…MMTG. The Ca(2+) site is built by Asp59, Asp61, Ser63, Glu65, Glu70, Asp99, Asp110, Asp135, Asp137, Ser139, Thr141, and Glu146.

It belongs to the troponin C family.

Its function is as follows. Troponin is the central regulatory protein of striated muscle contraction. Tn consists of three components: Tn-I which is the inhibitor of actomyosin ATPase, Tn-T which contains the binding site for tropomyosin and Tn-C. The binding of calcium to Tn-C abolishes the inhibitory action of Tn on actin filaments. The chain is Troponin C from Tachypleus tridentatus (Japanese horseshoe crab).